The following is a 101-amino-acid chain: Protein RADIALIS-like 2 (101 aa).

The 56-residue stretch at 9 to 64 (YGSGSWTVKQNKAFERALAVYDQDTPDRWHNVARAVGGKTPEEAKRQYDLLVRDIE) folds into the SANT domain. Residues 69-101 (GHVPFPDYKTTTGNSNRGRLRDEEKRMRSMKLQ) are disordered.

Expressed in the funiculus of ovules and in embryos. In young ovules, expression is observed in the adaxial side of the funiculus (the stalk connecting the embryo sac to the placenta). Also expressed in heart-stage embryos, in the cortex and endodermis of the hypocotyl region but not in the cotyledons, shoot and root apical meristems, provasculature or epidermis. Not detected in young seedlings, mature roots or in young floral primordia.

It localises to the nucleus. Its function is as follows. Probable transcription factor. Required for female gametophyte development. This Arabidopsis thaliana (Mouse-ear cress) protein is Protein RADIALIS-like 2 (RL2).